Reading from the N-terminus, the 307-residue chain is Putative S-adenosyl-L-methionine-dependent methyltransferase MUL_4430 (307 aa).

S-adenosyl-L-methionine-binding positions include D128 and 157–158; that span reads DL.

This sequence belongs to the UPF0677 family.

Functionally, exhibits S-adenosyl-L-methionine-dependent methyltransferase activity. The protein is Putative S-adenosyl-L-methionine-dependent methyltransferase MUL_4430 of Mycobacterium ulcerans (strain Agy99).